The sequence spans 492 residues: Xaa-Pro dipeptidase (492 aa).

Position 2 is an N-acetylalanine (Ala-2). Ser-167 is modified (phosphoserine). His-255 contributes to the a dipeptide binding site. Mn(2+)-binding residues include Asp-276, Asp-287, and His-370. Residue Asp-287 participates in a dipeptide binding. Residues His-377 and Arg-398 each coordinate a dipeptide. Mn(2+) is bound by residues Glu-412 and Glu-452.

It belongs to the peptidase M24B family. Eukaryotic-type prolidase subfamily. As to quaternary structure, homodimer. The cofactor is Mn(2+).

The catalysed reaction is Xaa-L-Pro dipeptide + H2O = an L-alpha-amino acid + L-proline. Functionally, dipeptidase that catalyzes the hydrolysis of dipeptides with a prolyl (Xaa-Pro) or hydroxyprolyl residue in the C-terminal position. The preferred dipeptide substrate is Gly-Pro, but other Xaa-Pro dipeptides, such as Ala-Pro, Met-Pro, Phe-Pro, Val-Pro and Leu-Pro, can be cleaved. Plays an important role in collagen metabolism because the high level of iminoacids in collagen. The polypeptide is Xaa-Pro dipeptidase (Pepd) (Rattus norvegicus (Rat)).